The chain runs to 313 residues: 2-phosphoglycerate kinase (313 aa).

In terms of domain architecture, ATP-cone spans Ser8 to Ser95.

Belongs to the 2-phosphoglycerate kinase family. Requires a divalent metal cation as cofactor.

The enzyme catalyses (2R)-2-phosphoglycerate + ATP = (2R)-2,3-bisphosphoglycerate + ADP + H(+). The protein operates within thermoadapter biosynthesis; cyclic 2,3-diphosphoglycerate biosynthesis; cyclic 2,3-diphosphoglycerate from 2-phospho-D-glycerate: step 1/2. Its function is as follows. Catalyzes the phosphorylation of 2-phosphoglycerate to 2,3-diphosphoglycerate. Involved in the biosynthesis of cyclic 2,3-bisphosphoglycerate, a thermoprotectant. The chain is 2-phosphoglycerate kinase from Methanococcus maripaludis (strain C5 / ATCC BAA-1333).